A 142-amino-acid polypeptide reads, in one-letter code: MKTFTAKPAEVRRDWFVVDAEGKTLGRLATEIARRLRGKHKAEYTPHVDTGDYIVVINAEKIHVTGNKAAAKQYYRHTGYPGGLRSMNFEKLIDHAPERVLEIAVKGMLPKGPLGRAMHKKMKVYAGTEHPHAAQQPQALNI.

It belongs to the universal ribosomal protein uL13 family. In terms of assembly, part of the 50S ribosomal subunit.

Its function is as follows. This protein is one of the early assembly proteins of the 50S ribosomal subunit, although it is not seen to bind rRNA by itself. It is important during the early stages of 50S assembly. The chain is Large ribosomal subunit protein uL13 from Marinomonas sp. (strain MWYL1).